Reading from the N-terminus, the 605-residue chain is Alpha-1,3-galactosidase B (605 aa).

Residues 1 to 19 form the signal peptide; the sequence is MKRIIFNFCFVWLAVSAFA. PbH1 repeat units follow at residues 428 to 450, 451 to 473, and 484 to 538; these read CPEV…LFST, PLKT…LLCG, and CRNV…VIED.

This sequence belongs to the glycosyl hydrolase 110 family. B subfamily.

The catalysed reaction is Hydrolysis of terminal, non-reducing branched (1-&gt;3)-alpha-D-galactosidic residues, producing free D-galactose.. It carries out the reaction Hydrolysis of terminal, non-reducing linear (1-&gt;3)-alpha-D-galactosidic residues, producing free D-galactose.. The enzyme catalyses Hydrolysis of terminal, non-reducing alpha-D-galactose residues in alpha-D-galactosides, including galactose oligosaccharides, galactomannans and galactolipids.. In terms of biological role, alpha-galactosidase. Removes both branched alpha-1,3-linked galactose residues of blood group B antigens and linear alpha-1,3-linked galactose structures. This Phocaeicola vulgatus (strain ATCC 8482 / DSM 1447 / JCM 5826 / CCUG 4940 / NBRC 14291 / NCTC 11154) (Bacteroides vulgatus) protein is Alpha-1,3-galactosidase B (glaB2).